The chain runs to 289 residues: 4-diphosphocytidyl-2-C-methyl-D-erythritol kinase (289 aa).

The active site involves Lys-10. 95-105 (PVSAGMGGGSA) is an ATP binding site. Asp-137 is a catalytic residue.

Belongs to the GHMP kinase family. IspE subfamily.

The catalysed reaction is 4-CDP-2-C-methyl-D-erythritol + ATP = 4-CDP-2-C-methyl-D-erythritol 2-phosphate + ADP + H(+). It functions in the pathway isoprenoid biosynthesis; isopentenyl diphosphate biosynthesis via DXP pathway; isopentenyl diphosphate from 1-deoxy-D-xylulose 5-phosphate: step 3/6. Catalyzes the phosphorylation of the position 2 hydroxy group of 4-diphosphocytidyl-2C-methyl-D-erythritol. This is 4-diphosphocytidyl-2-C-methyl-D-erythritol kinase from Ligilactobacillus salivarius (strain UCC118) (Lactobacillus salivarius).